The following is a 154-amino-acid chain: Interleukin-2 (154 aa).

The signal sequence occupies residues 1–20 (MYKLQFLSCIALTLALVANS). Residue threonine 23 is glycosylated (O-linked (GalNAc...) threonine). Cysteine 78 and cysteine 126 form a disulfide bridge. The N-linked (GlcNAc...) asparagine glycan is linked to asparagine 111.

Belongs to the IL-2 family.

Its subcellular location is the secreted. Functionally, cytokine produced by activated CD4-positive helper T-cells and to a lesser extend activated CD8-positive T-cells and natural killer (NK) cells that plays pivotal roles in the immune response and tolerance. Binds to a receptor complex composed of either the high-affinity trimeric IL-2R (IL2RA/CD25, IL2RB/CD122 and IL2RG/CD132) or the low-affinity dimeric IL-2R (IL2RB and IL2RG). Interaction with the receptor leads to oligomerization and conformation changes in the IL-2R subunits resulting in downstream signaling starting with phosphorylation of JAK1 and JAK3. In turn, JAK1 and JAK3 phosphorylate the receptor to form a docking site leading to the phosphorylation of several substrates including STAT5. This process leads to activation of several pathways including STAT, phosphoinositide-3-kinase/PI3K and mitogen-activated protein kinase/MAPK pathways. Functions as a T-cell growth factor and can increase NK-cell cytolytic activity as well. Promotes strong proliferation of activated B-cells and subsequently immunoglobulin production. Plays a pivotal role in regulating the adaptive immune system by controlling the survival and proliferation of regulatory T-cells, which are required for the maintenance of immune tolerance. Moreover, participates in the differentiation and homeostasis of effector T-cell subsets, including Th1, Th2, Th17 as well as memory CD8-positive T-cells. This Camelus bactrianus (Bactrian camel) protein is Interleukin-2 (IL2).